We begin with the raw amino-acid sequence, 260 residues long: MKLKNIHLYNYVVIYTKNCEIYINKGNEQVYIPPRMVAIFEKNISFNIETIRKGDGVLYESFDMKHELLTSLRRVIEPSVKFAAESYTNKRSFKERIFKVKSCSIVIDLFKRLKDNGSPEFTAIYELAFLVSKCENPSMFAISLFSSVAVTFSERIVTLLFSDLTRKWKLSDIAEEMHISEISVRKRLEQECLNFNQLILDVRMNQAAKFIIRSDHQIGMIASLVGYTSVSYFIKTFKEYYGVTPKKFEIGIKENLRCNR.

One can recognise an HTH araC/xylS-type domain in the interval 154–251 (ERIVTLLFSD…GVTPKKFEIG (98 aa)). 2 DNA-binding regions (H-T-H motif) span residues 171 to 192 (SDIAEEMHISEISVRKRLEQEC) and 218 to 241 (IGMIASLVGYTSVSYFIKTFKEYY).

In terms of assembly, homodimer.

Functionally, positive regulator of the expression of the 987P operon for the fimbrial protein in enterotoxigenic E.coli. The protein is HTH-type transcriptional activator FapR of Escherichia coli.